A 129-amino-acid chain; its full sequence is Large-conductance mechanosensitive channel (129 aa).

Transmembrane regions (helical) follow at residues 14–34 (IIDL…VTSL), 38–58 (IIMP…SFVY), and 67–87 (LGVF…IFMA).

This sequence belongs to the MscL family. In terms of assembly, homopentamer.

The protein resides in the cell membrane. Its function is as follows. Channel that opens in response to stretch forces in the membrane lipid bilayer. May participate in the regulation of osmotic pressure changes within the cell. The chain is Large-conductance mechanosensitive channel from Lysinibacillus sphaericus (strain C3-41).